Here is a 255-residue protein sequence, read N- to C-terminus: Zinc-finger homeodomain protein 6 (255 aa).

The tract at residues 1-35 (MEFRGHDEPVDEMGVAYGRTPPSSSSSPAASASAG) is disordered. The segment covering 21-35 (PPSSSSSPAASASAG) has biased composition (low complexity). A ZF-HD dimerization-type; degenerate zinc finger spans residues 45-93 (YHECLRNHAAAMGGHVVDGCREFMPMPGDAADALKCAACGCHRSFHRKD). Positions 106–126 (PSPPTPRVPLLMPPPQPQPHP) are enriched in pro residues. Disordered regions lie at residues 106 to 181 (PSPP…KFTP) and 226 to 255 (NNKSSIGSSSGGGSRRQPQEQQSQQQQQQQ). Residues 139–153 (YHHTPSGSGGTTTES) show a composition bias toward low complexity. A DNA-binding region (homeobox) is located at residues 172 to 235 (RKRFRTKFTP…NNKSSIGSSS (64 aa)). The span at 240 to 255 (RRQPQEQQSQQQQQQQ) shows a compositional bias: low complexity.

Homo- and heterodimer with other ZFHD proteins.

Its subcellular location is the nucleus. Functionally, putative transcription factor. This is Zinc-finger homeodomain protein 6 (ZHD6) from Oryza sativa subsp. japonica (Rice).